A 270-amino-acid chain; its full sequence is Acyl-[acyl-carrier-protein]--UDP-N-acetylglucosamine O-acyltransferase (270 aa).

This sequence belongs to the transferase hexapeptide repeat family. LpxA subfamily. Homotrimer.

Its subcellular location is the cytoplasm. It catalyses the reaction a (3R)-hydroxyacyl-[ACP] + UDP-N-acetyl-alpha-D-glucosamine = a UDP-3-O-[(3R)-3-hydroxyacyl]-N-acetyl-alpha-D-glucosamine + holo-[ACP]. It functions in the pathway glycolipid biosynthesis; lipid IV(A) biosynthesis; lipid IV(A) from (3R)-3-hydroxytetradecanoyl-[acyl-carrier-protein] and UDP-N-acetyl-alpha-D-glucosamine: step 1/6. Functionally, involved in the biosynthesis of lipid A, a phosphorylated glycolipid that anchors the lipopolysaccharide to the outer membrane of the cell. This Helicobacter pylori (strain G27) protein is Acyl-[acyl-carrier-protein]--UDP-N-acetylglucosamine O-acyltransferase.